The following is a 169-amino-acid chain: N-alpha-acetyltransferase 50 (169 aa).

An N-acetyltransferase domain is found at isoleucine 6–lysine 155. Threonine 12 carries the post-translational modification Phosphothreonine. Residue tyrosine 31 participates in substrate binding. Lysine 34 and lysine 37 each carry N6-acetyllysine. The active site involves tyrosine 73. Residue methionine 75 coordinates substrate. Leucine 77 to threonine 90 serves as a coordination point for acetyl-CoA. Tyrosine 110 is modified (phosphotyrosine). The active site involves histidine 112. CoA is bound at residue asparagine 117–lysine 126. The segment at tyrosine 138–arginine 141 is substrate. N6-acetyllysine is present on lysine 140.

Belongs to the acetyltransferase family. GNAT subfamily. Component of the N-terminal acetyltransferase E (NatE) complex at least composed of NAA10, NAA15 and NAA50. Interacts with NAA10. Interacts with NAA15. Predominantly interacts with NAA15 in the N-terminal acetyltransferase A complex (NatA complex); the interactions reduce the acetylation activity of the NatA complex. Component of the N-terminal acetyltransferase E (NatE)/HYPK complex at least composed of NAA10, NAA15, NAA50 and HYPK. Within the complex interacts with NAA15. Its capacity to interact with the NatA complex is reduced by HYPK. Interacts with NAA35.

The protein resides in the cytoplasm. The protein localises to the nucleus. The enzyme catalyses N-terminal L-methionyl-L-alanyl-[protein] + acetyl-CoA = N-terminal N(alpha)-acetyl-L-methionyl-L-alanyl-[protein] + CoA + H(+). The catalysed reaction is N-terminal L-methionyl-L-seryl-[protein] + acetyl-CoA = N-terminal N(alpha)-acetyl-L-methionyl-L-seryl-[protein] + CoA + H(+). It catalyses the reaction N-terminal L-methionyl-L-valyl-[protein] + acetyl-CoA = N-terminal N(alpha)-acetyl-L-methionyl-L-valyl-[protein] + CoA + H(+). It carries out the reaction N-terminal L-methionyl-L-threonyl-[protein] + acetyl-CoA = N-terminal N(alpha)-acetyl-L-methionyl-L-threonyl-[protein] + CoA + H(+). The enzyme catalyses N-terminal L-methionyl-L-lysyl-[protein] + acetyl-CoA = N-terminal N(alpha)-acetyl-L-methionyl-L-lysyl-[protein] + CoA + H(+). The catalysed reaction is N-terminal L-methionyl-L-leucyl-[protein] + acetyl-CoA = N-terminal N(alpha)-acetyl-L-methionyl-L-leucyl-[protein] + CoA + H(+). It catalyses the reaction N-terminal L-methionyl-L-phenylalanyl-[protein] + acetyl-CoA = N-terminal N(alpha)-acetyl-L-methionyl-L-phenylalanyl-[protein] + CoA + H(+). It carries out the reaction N-terminal L-methionyl-L-tyrosyl-[protein] + acetyl-CoA = N-terminal N(alpha)-acetyl-L-methionyl-L-tyrosyl-[protein] + CoA + H(+). In terms of biological role, N-alpha-acetyltransferase that acetylates the N-terminus of proteins that retain their initiating methionine. Has a broad substrate specificity: able to acetylate the initiator methionine of most peptides, except for those with a proline in second position. Also displays N-epsilon-acetyltransferase activity by mediating acetylation of the side chain of specific lysines on proteins. Autoacetylates in vivo. The relevance of N-epsilon-acetyltransferase activity is however unclear: able to acetylate H4 in vitro, but this result has not been confirmed in vivo. Component of N-alpha-acetyltransferase complexes containing NAA10 and NAA15, which has N-alpha-acetyltransferase activity. Does not influence the acetyltransferase activity of NAA10. However, it negatively regulates the N-alpha-acetyltransferase activity of the N-terminal acetyltransferase A complex (also called the NatA complex). The multiprotein complexes probably constitute the major contributor for N-terminal acetylation at the ribosome exit tunnel, with NAA10 acetylating all amino termini that are devoid of methionine and NAA50 acetylating other peptides. Required for sister chromatid cohesion during mitosis by promoting binding of CDCA5/sororin to cohesin: may act by counteracting the function of NAA10. This Bos taurus (Bovine) protein is N-alpha-acetyltransferase 50 (NAA50).